A 224-amino-acid polypeptide reads, in one-letter code: Magnesium-protoporphyrin O-methyltransferase (224 aa).

The protein belongs to the class I-like SAM-binding methyltransferase superfamily. Magnesium protoporphyrin O-methyltransferase family.

The catalysed reaction is Mg-protoporphyrin IX + S-adenosyl-L-methionine = Mg-protoporphyrin IX 13-monomethyl ester + S-adenosyl-L-homocysteine. It functions in the pathway porphyrin-containing compound metabolism; bacteriochlorophyll biosynthesis (light-independent). Its function is as follows. Converts Mg-protoporphyrin IX to Mg-protoporphyrin IX methylester using S-adenosyl-L-methionine as a cofactor. The sequence is that of Magnesium-protoporphyrin O-methyltransferase (bchM) from Rhodobacter capsulatus (Rhodopseudomonas capsulata).